The following is a 2240-amino-acid chain: Death-inducer obliterator 1 (2240 aa).

An N-acetylmethionine modification is found at M1. The span at 1–25 (MDDKGDPSNEEAPKAIKPTSKEFRK) shows a compositional bias: basic and acidic residues. The tract at residues 1–259 (MDDKGDPSNE…EPGDLGRPKP (259 aa)) is disordered. Phosphoserine is present on residues S60 and S114. The span at 111–130 (SEGSVESASETRSGPQSAST) shows a compositional bias: polar residues. A compositionally biased stretch (basic and acidic residues) spans 132–146 (VKERPASSEKVKGGD). Residues 147–156 (DHDDTSDSDS) show a composition bias toward acidic residues. T151 is subject to Phosphothreonine. Residues S152 and S154 each carry the phosphoserine modification. Short sequence motifs (nuclear localization signal) lie at residues 165–173 (QNRLRRKRE) and 185–193 (QSRLRKKRR). Positions 172–181 (REQEPTERPL) are enriched in basic and acidic residues. A compositionally biased stretch (basic and acidic residues) spans 230–246 (GKDDRESKLEGKAAQDI). K247 is covalently cross-linked (Glycyl lysine isopeptide (Lys-Gly) (interchain with G-Cter in SUMO2)). The PHD-type zinc finger occupies 268-322 (ALYCICRQPHNNRFMICCDRCEEWFHGDCVGISEARGRLLERNGEDYICPNCTIL). Disordered regions lie at residues 431-456 (SGKEQKPKPKEKMKMKPEKPSLPKCG), 501-567 (STPS…RNLV), 584-618 (KKPPSGFKGTIPKRPWLSATPSSGASAARQAGPAP), 773-826 (RPAR…EKST), 860-947 (VPSA…EDLS), 1013-1045 (LAKPSSSPDPRYLSVPPSPNISTSESRSPPEGD), 1206-1427 (GELD…VAYD), 1453-1472 (RRNSVERPAEPVAGAATPSL), and 1517-2240 (SDAL…ASQA). Residues 433-451 (KEQKPKPKEKMKMKPEKPS) are compositionally biased toward basic and acidic residues. Residues 501-510 (STPSWASDHN) are compositionally biased toward polar residues. S523 carries the phosphoserine modification. A compositionally biased stretch (basic and acidic residues) spans 530 to 541 (STKEDRRSEEKA). Composition is skewed to low complexity over residues 542 to 551 (AAMAASKKTA) and 604 to 618 (PSSGASAARQAGPAP). The 121-residue stretch at 670–790 (IRQNIRRSLK…SRTKLHNESK (121 aa)) folds into the TFIIS central domain. Over residues 773–791 (RPARSVMESRTKLHNESKK) the composition is skewed to basic and acidic residues. The segment covering 800–815 (PDLEDSPPVSDSEEQQ) has biased composition (acidic residues). 2 positions are modified to phosphoserine: S805 and S809. Residues 878 to 890 (VKKEDLKSKHDSS) show a composition bias toward basic and acidic residues. K879 participates in a covalent cross-link: Glycyl lysine isopeptide (Lys-Gly) (interchain with G-Cter in SUMO2). S889 and S898 each carry phosphoserine. Residues 930-941 (PGPPGDGHPEPS) are compositionally biased toward pro residues. Phosphoserine occurs at positions 1019, 1030, and 1040. Residues 1207 to 1220 (ELDKMDEKRTRLQP) are compositionally biased toward basic and acidic residues. At Y1244 the chain carries Phosphotyrosine. The residue at position 1256 (T1256) is a Phosphothreonine. The segment covering 1258–1271 (PGSPPPPPPLPEPP) has biased composition (pro residues). Phosphoserine occurs at positions 1260 and 1312. The segment covering 1276-1313 (LSSLKPAAPSPATAATTAAAASTAASSTASSASKTASP) has biased composition (low complexity). The span at 1376 to 1392 (LEEEEDDRPYDPEEEYD) shows a compositional bias: acidic residues. Residues 1393 to 1424 (PERAFDTQLVERGRRHEVERAPEAAAAEREEV) show a composition bias toward basic and acidic residues. Position 1456 is a phosphoserine (S1456). Phosphothreonine is present on T1469. Phosphoserine is present on residues S1522 and S1714. Residues 1771 to 1782 (FPGPRGPAPPFP) show a composition bias toward pro residues. An Omega-N-methylarginine modification is found at R1835. A compositionally biased stretch (basic and acidic residues) spans 1842–1856 (FEERKDPHGEKREFQ). 7 positions are modified to asymmetric dimethylarginine: R1893, R1894, R1977, R1982, R1993, R2008, and R2024. Residues 2044–2059 (AGPPSALSSSAPGQGP) are compositionally biased toward low complexity. 2 stretches are compositionally biased toward basic and acidic residues: residues 2069-2101 (DFREGKGHEYRNQTFEGRQRERFDVGPKEKPLE) and 2109-2230 (ASED…EASR).

In terms of assembly, interacts specifically (via PHD-type zinc finger) with histone H3 that is trimethylated at 'Lys-4' (H3K4me3), histone phosphorylation at 'Thr-3' or 'Thr-6' disrupts this binding and promotes translocation of DIDO1 from chromatin to the mitotic spindle during mitosis. Ubiquitous.

The protein resides in the cytoplasm. It is found in the nucleus. It localises to the cytoskeleton. The protein localises to the spindle. Putative transcription factor, weakly pro-apoptotic when overexpressed. Tumor suppressor. Required for early embryonic stem cell development. Its function is as follows. Displaces isoform 4 at the onset of differentiation, required for repression of stemness genes. The protein is Death-inducer obliterator 1 (DIDO1) of Homo sapiens (Human).